The sequence spans 250 residues: Glycerol uptake facilitator protein-like 5 (250 aa).

Helical transmembrane passes span Glu-12 to Leu-32 and Gly-46 to Phe-66. The NPA 1 signature appears at Asn-75 to Ala-77. 3 consecutive transmembrane segments (helical) span residues Ile-85–Ile-105, Leu-142–Leu-162, and Ile-172–Gly-192. Positions Asn-199–Ala-201 match the NPA 2 motif. Residues Val-230 to Leu-250 form a helical membrane-spanning segment.

This sequence belongs to the MIP/aquaporin (TC 1.A.8) family.

It localises to the cell membrane. Its function is as follows. Probable transporter that facilitates the transmembrane diffusion of an unknown substrate. Is not permeable to water, dihydroxyacetone, glycerol, urea, H(2)O(2) and D/L-lactic acid. In Lactiplantibacillus plantarum (strain ATCC BAA-793 / NCIMB 8826 / WCFS1) (Lactobacillus plantarum), this protein is Glycerol uptake facilitator protein-like 5.